A 193-amino-acid chain; its full sequence is Probable GTP-binding protein EngB (193 aa).

The region spanning 24-193 (NIPEIALAGR…ELKAALAELL (170 aa)) is the EngB-type G domain. GTP contacts are provided by residues 32–39 (GRSNVGKS), 59–63 (GKTRT), 77–80 (DLPG), 144–147 (TKAD), and 174–176 (FSA). The Mg(2+) site is built by S39 and T61.

This sequence belongs to the TRAFAC class TrmE-Era-EngA-EngB-Septin-like GTPase superfamily. EngB GTPase family. Mg(2+) serves as cofactor.

Its function is as follows. Necessary for normal cell division and for the maintenance of normal septation. In Syntrophomonas wolfei subsp. wolfei (strain DSM 2245B / Goettingen), this protein is Probable GTP-binding protein EngB.